The chain runs to 328 residues: Endochitinase (328 aa).

The N-terminal stretch at 1-27 is a signal peptide; the sequence is MKKNRMMMMIWSVGVVWMLLLVGGSYG. A Chitin-binding type-1 domain is found at 28–68; that stretch reads EQCGRQAGGALCPGGNCCSQFGWCGSTTDYCGPGCQSQCGG. Cystine bridges form between cysteine 30-cysteine 45, cysteine 39-cysteine 51, cysteine 44-cysteine 58, cysteine 62-cysteine 66, cysteine 97-cysteine 159, cysteine 170-cysteine 178, and cysteine 277-cysteine 309. Glutamate 141 serves as the catalytic Proton donor. Positions 318–328 are cleaved as a propeptide — removed in mature form; it reads SLLLSDLVTSQ.

It belongs to the glycosyl hydrolase 19 family. Chitinase class I subfamily.

It localises to the vacuole. The catalysed reaction is Random endo-hydrolysis of N-acetyl-beta-D-glucosaminide (1-&gt;4)-beta-linkages in chitin and chitodextrins.. Functionally, defense against chitin-containing fungal pathogens. This chain is Endochitinase, found in Phaseolus vulgaris (Kidney bean).